We begin with the raw amino-acid sequence, 944 residues long: Putative ATP-dependent RNA helicase (944 aa).

The 170-residue stretch at 66-235 folds into the Helicase ATP-binding domain; sequence TTPRSPIDGI…VPLHNLLMKL (170 aa). 79 to 86 lines the ATP pocket; the sequence is HGVGTGKT. The DEAH box signature appears at 183-186; that stretch reads DEAH. In terms of domain architecture, Helicase C-terminal spans 451–523; the sequence is CLTREVMTVP…QIIGRGIRYQ (73 aa).

The protein belongs to the DEAD box helicase family. DEAH subfamily.

The catalysed reaction is ATP + H2O = ADP + phosphate + H(+). This chain is Putative ATP-dependent RNA helicase, found in Heliothis virescens ascovirus 3e (HvAV-3e).